Reading from the N-terminus, the 480-residue chain is Adenosylhomocysteinase (480 aa).

T63, D142, and E203 together coordinate substrate. 204–206 (TTT) serves as a coordination point for NAD(+). Substrate contacts are provided by K233 and D237. Residues N238, 267–272 (GYGDVG), E290, N325, 346–348 (IGH), and N394 contribute to the NAD(+) site.

It belongs to the adenosylhomocysteinase family. The cofactor is NAD(+).

It localises to the cytoplasm. The enzyme catalyses S-adenosyl-L-homocysteine + H2O = L-homocysteine + adenosine. The protein operates within amino-acid biosynthesis; L-homocysteine biosynthesis; L-homocysteine from S-adenosyl-L-homocysteine: step 1/1. May play a key role in the regulation of the intracellular concentration of adenosylhomocysteine. The polypeptide is Adenosylhomocysteinase (Xylella fastidiosa (strain Temecula1 / ATCC 700964)).